Reading from the N-terminus, the 254-residue chain is MRESMRIELELQTDNFTVIPYNHQYYLASAIYNKIHSANPAYAKRLHNYQKFKFFTFSLLQIRKRVIRKEGIETIDGKAYLYISSPNNEFIENFVAGLLEDGKLRVGNVEFFVRKAKILPIPKKFNILKTISPIYLKTMIETEDGLKTYDLLPNNSKFYENLKNNLKKKYEAFYNEKCDMNFEFEVLKFRPKRMRIKNDIYCRCSEMVFKVWGDYDLIKFGYECGFGEKNSMGFGMVVNVEDKNQKNKKLKTKI.

Residue Tyr32 is the Proton acceptor of the active site. His47 serves as the catalytic Proton donor.

It belongs to the CRISPR-associated protein Cas6/Cse3/CasE family.

Its function is as follows. CRISPR (clustered regularly interspaced short palindromic repeat) is an adaptive immune system that provides protection against mobile genetic elements (viruses, transposable elements and conjugative plasmids). CRISPR clusters contain sequences complementary to antecedent mobile elements and target invading nucleic acids. CRISPR clusters are transcribed and processed into CRISPR RNA (crRNA). This protein processes pre-crRNA into individual crRNA units. The sequence is that of CRISPR-associated endoribonuclease Cas6 1 (cas6a) from Methanocaldococcus jannaschii (strain ATCC 43067 / DSM 2661 / JAL-1 / JCM 10045 / NBRC 100440) (Methanococcus jannaschii).